The chain runs to 278 residues: Non-structural protein 2a (278 aa).

The protein belongs to the coronaviruses ns2a protein family.

The chain is Non-structural protein 2a from Bovine coronavirus (strain Mebus) (BCoV).